Here is a 719-residue protein sequence, read N- to C-terminus: Putative alpha-1,3-mannosyltransferase MNT4 (719 aa).

Residues 1 to 4 (MKFH) lie on the Cytoplasmic side of the membrane. A helical transmembrane segment spans residues 5-22 (LKRYVIVTSILLSFFLLF). Residues 23–719 (RRQFLPLTQR…KKLIEIWLQD (697 aa)) are Lumenal-facing. N-linked (GlcNAc...) asparagine glycans are attached at residues asparagine 148, asparagine 273, and asparagine 449.

This sequence belongs to the MNN1/MNT family.

It is found in the golgi apparatus membrane. The protein operates within protein modification; protein glycosylation. Functionally, responsible for addition of the terminal mannose residues to the outer chain of core N-linked polysaccharides and to O-linked mannotriose. Implicated in late Golgi modifications. This chain is Putative alpha-1,3-mannosyltransferase MNT4 (MNT4), found in Candida albicans (strain SC5314 / ATCC MYA-2876) (Yeast).